A 264-amino-acid polypeptide reads, in one-letter code: Short-chain dehydrogenase/reductase ucsE (264 aa).

The helical transmembrane segment at 13 to 32 threads the bilayer; sequence LVVVVGGTSGLGFAVAQAAV. NADP(+)-binding residues include L23, S43, and D74. The N-linked (GlcNAc...) asparagine glycan is linked to N125. 2 residues coordinate NADP(+): R130 and K139. The active-site Proton donor is the S157. Residues V202 and T204 each contribute to the NADP(+) site.

Belongs to the short-chain dehydrogenases/reductases (SDR) family. NADP(+) is required as a cofactor.

The protein resides in the membrane. It functions in the pathway mycotoxin biosynthesis. Short-chain dehydrogenase/reductase; part of the gene cluster that mediates the biosynthesis of UCS1025A, a member of the pyrrolizidinone family that acts as a strong telomerase inhibitor and displays potent antibacterial and antitumor properties. These compounds share a hemiaminal-containing pyrrolizidinone core fused with a gamma-lactone, giving a furopyrrolizidine that is connected to a decalin fragment. The polyketide synthase module (PKS) of the PKS-NRPS ucsA is responsible for the synthesis of the polyketide backbone via the condensation of an acetyl-CoA starter unit with 6 malonyl-CoA units. The downstream nonribosomal peptide synthetase (NRPS) module then amidates the carboxyl end of the polyketide with a 2S,3S-methylproline derived from L-isoleucine by the 2-oxoglutarate-dependent dioxygenase ucsF which converts L-isoleucine to (4S,5S)-4-methylpyrroline-5-carboxylate that is further converted to 2S,3S-methylproline by the pyrroline-5-carboxylate reductase ucsG. Reductive release of the completed aminoacyl polyketide from the assembly line can form the 3-pyrrolin-2-one structure via an intramolecular Knoevenagel reaction. Because ucsA lacks a designated enoylreductase (ER) domain, the required activity is provided the enoyl reductase ucsL. This keto acyclic precursor is the substrate of the Diels-Alderase ucsH, that catalyzes the Diels-Alder cycloaddition. Oxidation of the 3S-methyl group to a carboxylate by the cytochrome P450 monooxygenase ucsK allows an oxa-Michael cyclization that might involve the reductase/dehydrogenase ucsI and which furnishes the furopyrrolizidine. The oxidase ucsJ likely plays a critical role in stereoselective reduction of the C5-C6 double bond to afford the required R-configured carboxylate group. Further enolization and oxidation at C5 by an unidentified enzyme affords the last intermediate that can undergo oxa-Michael cyclization to yield UCS1025A. The chain is Short-chain dehydrogenase/reductase ucsE from Acremonium sp.